We begin with the raw amino-acid sequence, 276 residues long: NADH-cytochrome b5 reductase 2 (276 aa).

In terms of domain architecture, FAD-binding FR-type spans 15-127; it reads EAKYPLPLIE…RGPTGRLFYN (113 aa). K17 is modified (N6-acetyllysine). Y18 is modified (phosphotyrosine). Residues 107-137 and 146-181 contribute to the FAD site; these read ENMKIGDTILFRGPTGRLFYNEPGTLLIKAN and LVHHLGMIAGGTGITPMLQLIRHITKDTSDETRMSL.

The protein belongs to the flavoprotein pyridine nucleotide cytochrome reductase family. It depends on FAD as a cofactor.

It catalyses the reaction 2 Fe(III)-[cytochrome b5] + NADH = 2 Fe(II)-[cytochrome b5] + NAD(+) + H(+). In terms of biological role, NADH-cytochrome b5 reductases are involved in desaturation and elongation of fatty acids, cholesterol biosynthesis, drug metabolism, and, in erythrocyte, methemoglobin reduction. Responsible for NADH-dependent lucigenin chemiluminescence in spermatozoa by reducing both lucigenin and 2-[4-iodophenyl]-3-[4-nitrophenyl]-5-[2,4-disulfophenyl]-2H tetrazolium monosodium salt (WST-1). The polypeptide is NADH-cytochrome b5 reductase 2 (Cyb5r2) (Mus musculus (Mouse)).